Reading from the N-terminus, the 342-residue chain is Biotin synthase (342 aa).

The 225-residue stretch at 36-260 (NRIQISTLLS…MMPKSYIRLS (225 aa)) folds into the Radical SAM core domain. Positions 51, 55, and 58 each coordinate [4Fe-4S] cluster. [2Fe-2S] cluster-binding residues include cysteine 95, cysteine 126, cysteine 186, and arginine 258.

This sequence belongs to the radical SAM superfamily. Biotin synthase family. Homodimer. It depends on [4Fe-4S] cluster as a cofactor. [2Fe-2S] cluster serves as cofactor.

It carries out the reaction (4R,5S)-dethiobiotin + (sulfur carrier)-SH + 2 reduced [2Fe-2S]-[ferredoxin] + 2 S-adenosyl-L-methionine = (sulfur carrier)-H + biotin + 2 5'-deoxyadenosine + 2 L-methionine + 2 oxidized [2Fe-2S]-[ferredoxin]. It functions in the pathway cofactor biosynthesis; biotin biosynthesis; biotin from 7,8-diaminononanoate: step 2/2. Functionally, catalyzes the conversion of dethiobiotin (DTB) to biotin by the insertion of a sulfur atom into dethiobiotin via a radical-based mechanism. In Buchnera aphidicola subsp. Schizaphis graminum (strain Sg), this protein is Biotin synthase.